The following is a 546-amino-acid chain: Chaperonin GroEL (546 aa).

ATP is bound by residues Thr-30 to Pro-33, Lys-51, Asp-87 to Thr-91, Gly-415, and Asp-497. Residues Pro-527–Phe-546 form a disordered region. Gly residues predominate over residues Pro-537–Phe-546.

This sequence belongs to the chaperonin (HSP60) family. Forms a cylinder of 14 subunits composed of two heptameric rings stacked back-to-back. Interacts with the co-chaperonin GroES.

It is found in the cytoplasm. The enzyme catalyses ATP + H2O + a folded polypeptide = ADP + phosphate + an unfolded polypeptide.. Its function is as follows. Together with its co-chaperonin GroES, plays an essential role in assisting protein folding. The GroEL-GroES system forms a nano-cage that allows encapsulation of the non-native substrate proteins and provides a physical environment optimized to promote and accelerate protein folding. The protein is Chaperonin GroEL of Methylorubrum populi (strain ATCC BAA-705 / NCIMB 13946 / BJ001) (Methylobacterium populi).